A 395-amino-acid chain; its full sequence is Phosphoglycerate kinase (395 aa).

Residues 21 to 23 (DIN), Arg36, 59 to 62 (HFGR), Arg114, and Arg147 each bind substrate. Residues Lys197, Glu322, and 352-355 (GGDT) each bind ATP.

The protein belongs to the phosphoglycerate kinase family. As to quaternary structure, monomer.

The protein resides in the cytoplasm. The catalysed reaction is (2R)-3-phosphoglycerate + ATP = (2R)-3-phospho-glyceroyl phosphate + ADP. The protein operates within carbohydrate degradation; glycolysis; pyruvate from D-glyceraldehyde 3-phosphate: step 2/5. The protein is Phosphoglycerate kinase of Roseobacter denitrificans (strain ATCC 33942 / OCh 114) (Erythrobacter sp. (strain OCh 114)).